The primary structure comprises 611 residues: Phosphomethylpyrimidine synthase (611 aa).

Residues Asn-218, Met-247, Tyr-276, His-312, 332–334, 373–376, and Glu-412 each bind substrate; these read SRG and DGLR. Position 416 (His-416) interacts with Zn(2+). Residue Tyr-439 participates in substrate binding. Residue His-480 coordinates Zn(2+). The [4Fe-4S] cluster site is built by Cys-560, Cys-563, and Cys-568.

It belongs to the ThiC family. As to quaternary structure, homodimer. The cofactor is [4Fe-4S] cluster.

The enzyme catalyses 5-amino-1-(5-phospho-beta-D-ribosyl)imidazole + S-adenosyl-L-methionine = 4-amino-2-methyl-5-(phosphooxymethyl)pyrimidine + CO + 5'-deoxyadenosine + formate + L-methionine + 3 H(+). It participates in cofactor biosynthesis; thiamine diphosphate biosynthesis. In terms of biological role, catalyzes the synthesis of the hydroxymethylpyrimidine phosphate (HMP-P) moiety of thiamine from aminoimidazole ribotide (AIR) in a radical S-adenosyl-L-methionine (SAM)-dependent reaction. In Caulobacter sp. (strain K31), this protein is Phosphomethylpyrimidine synthase.